A 1178-amino-acid chain; its full sequence is MLRMKLPLKPTHPAEPPPEAEEPEADARPGAKAPSRRRRDCRPPPPPPPPAGPSRGPLPPPPPPRGLGPPVAGGAAAGAGMPGGGGGPSAALREQERVYEWFGLVLGSAQRLEFMCGLLDLCNPLELRFLGSCLEDLARKDYHYLRDSEAKANGLSDPGPLADFREPAVRSRLIVYLALLGSENREAAGRLHRLLPQVDSVLKSLRAARGEGSRGGAEDERGEDGDGEQDAEKDGSGPEGGIVEPRVGGGLGSRAQEELLLLFTMASLHPAFSFHQRVTLREHLERLRAALRGGPEDAEVEVEPCKFAGPRAQNNSAHGDYMQNNESSLIEQAPIPQDGLTVAPHRAQREAVHIEKIMLKGVQRKRADKYWEYTFKVNWSDLSVTTVTKTHQELQEFLLKLPKELSSETFDKTILRALNQGSLKREERRHPDLEPILRQLFSSSSQAFLQSQKVHSFFQSISSDSLHSINNLQSSLKTSKILEHLKEDSSEASSQEEDVLQHAIIHKKHTGKSPIVNNIGTSCSPLDGLTMQYSEQNGIVDWRKQSCTTIQHPEHCVTSADQHSAEKRSLSSINKKKGKPQTEKEKIKKTDNRLNSRINGIRLSTPQHAHGGTVKDVNLDIGSGHDTCGETSSESYSSPSSPRHDGRESFESEEEKDRDTDSNSEDSGNPSTTRFTGYGSVNQTVTVKPPVQIASLGNENGNLLEDPLNSPKYQHISFMPTLHCVMHNGAQKSEVVVPAPKPADGKTIGMLVPSPVAISAIRESANSTPVGILGPTACTGESEKHLELLASPLPIPSTFLPHSSTPALHLTVQRLKLPPPQGSSESCTVNIPQQPPGSLSIASPNTAFIPIHNPGSFPGSPVATTDPITKSASQVVGLNQMVPQIEGNTGTVPQPTNVKVVLPAAGLSAAQPPASYPLPGSPLAAGVLPSQNSSVLSTAATSPQPASAGISQAQATVPPAVPTHTPGPAPSPSPALTHSTAQSDSTSYISAVGNTNANGTVVPPQQMGSGPCGSCGRRCSCGTNGNLQLNSYYYPNPMPGPMYRVPSFFTLPSICNGSYLNQAHQSNGNQLPFFLPQTPYANGLVHDPVMGSQANYGMQQMAGFGRFYPVYPAPNVVANTSGSGPKKNGNVSCYNCGVSGHYAQDCKQSSMEANQQGTYRLRYAPPLPPSNDTLDSAD.

4 disordered regions span residues 1 to 90, 207 to 249, 557 to 683, and 936 to 986; these read MLRM…GPSA, AARG…RVGG, VTSA…SVNQ, and LSTA…SDST. Over residues 43 to 67 the composition is skewed to pro residues; that stretch reads PPPPPPPPAGPSRGPLPPPPPPRGL. The segment covering 75-88 has biased composition (gly residues); that stretch reads AAAGAGMPGGGGGP. Over residues 208-219 the composition is skewed to basic and acidic residues; that stretch reads ARGEGSRGGAED. A compositionally biased stretch (acidic residues) spans 220-229; that stretch reads ERGEDGDGEQ. Position 236 is a phosphoserine (serine 236). Residues 580–594 are compositionally biased toward basic and acidic residues; that stretch reads PQTEKEKIKKTDNRL. Residues 595-607 show a composition bias toward polar residues; it reads NSRINGIRLSTPQ. Residues 632 to 641 show a composition bias toward low complexity; sequence SSESYSSPSS. Over residues 642–661 the composition is skewed to basic and acidic residues; that stretch reads PRHDGRESFESEEEKDRDTD. Residues 665–683 show a composition bias toward polar residues; it reads EDSGNPSTTRFTGYGSVNQ. The span at 937-948 shows a compositional bias: low complexity; sequence STAATSPQPASA. Residues 959 to 973 are compositionally biased toward pro residues; sequence PAVPTHTPGPAPSPS. Residues 974-986 are compositionally biased toward polar residues; sequence PALTHSTAQSDST. Residues 1131–1148 form a CCHC-type zinc finger; the sequence is VSCYNCGVSGHYAQDCKQ.

This Homo sapiens (Human) protein is Zinc finger CCHC domain-containing protein 2.